The primary structure comprises 689 residues: tRNA 5-methylaminomethyl-2-thiouridine biosynthesis bifunctional protein MnmC (689 aa).

Positions 1–245 (MNQRPIQTAT…KREMLTGTLP (245 aa)) are tRNA (mnm(5)s(2)U34)-methyltransferase. The FAD-dependent cmnm(5)s(2)U34 oxidoreductase stretch occupies residues 270 to 689 (IGGGIVSALT…RSPATQESSR (420 aa)).

In the N-terminal section; belongs to the methyltransferase superfamily. tRNA (mnm(5)s(2)U34)-methyltransferase family. The protein in the C-terminal section; belongs to the DAO family. It depends on FAD as a cofactor.

Its subcellular location is the cytoplasm. The catalysed reaction is 5-aminomethyl-2-thiouridine(34) in tRNA + S-adenosyl-L-methionine = 5-methylaminomethyl-2-thiouridine(34) in tRNA + S-adenosyl-L-homocysteine + H(+). Catalyzes the last two steps in the biosynthesis of 5-methylaminomethyl-2-thiouridine (mnm(5)s(2)U) at the wobble position (U34) in tRNA. Catalyzes the FAD-dependent demodification of cmnm(5)s(2)U34 to nm(5)s(2)U34, followed by the transfer of a methyl group from S-adenosyl-L-methionine to nm(5)s(2)U34, to form mnm(5)s(2)U34. This chain is tRNA 5-methylaminomethyl-2-thiouridine biosynthesis bifunctional protein MnmC, found in Yersinia pseudotuberculosis serotype O:1b (strain IP 31758).